The primary structure comprises 95 residues: Co-chaperonin GroES (95 aa).

The protein belongs to the GroES chaperonin family. As to quaternary structure, heptamer of 7 subunits arranged in a ring. Interacts with the chaperonin GroEL.

The protein resides in the cytoplasm. Its function is as follows. Together with the chaperonin GroEL, plays an essential role in assisting protein folding. The GroEL-GroES system forms a nano-cage that allows encapsulation of the non-native substrate proteins and provides a physical environment optimized to promote and accelerate protein folding. GroES binds to the apical surface of the GroEL ring, thereby capping the opening of the GroEL channel. The chain is Co-chaperonin GroES from Chlorobium phaeobacteroides (strain DSM 266 / SMG 266 / 2430).